Consider the following 184-residue polypeptide: Holliday junction branch migration complex subunit RuvA (184 aa).

The domain I stretch occupies residues 1 to 64; it reads MIKAIEGVVT…EDANLLYGFL (64 aa). The segment at 65–134 is domain II; the sequence is DANEQKMFEM…IAELSDTKLI (70 aa). The interval 134–137 is flexible linker; the sequence is ISDE. The interval 138–184 is domain III; that stretch reads SVPSYQNEALLALEALGFKREKIVKILPDCKSENTSDLIKEALKKLG.

Belongs to the RuvA family. Homotetramer. Forms an RuvA(8)-RuvB(12)-Holliday junction (HJ) complex. HJ DNA is sandwiched between 2 RuvA tetramers; dsDNA enters through RuvA and exits via RuvB. An RuvB hexamer assembles on each DNA strand where it exits the tetramer. Each RuvB hexamer is contacted by two RuvA subunits (via domain III) on 2 adjacent RuvB subunits; this complex drives branch migration. In the full resolvosome a probable DNA-RuvA(4)-RuvB(12)-RuvC(2) complex forms which resolves the HJ.

It is found in the cytoplasm. Its function is as follows. The RuvA-RuvB-RuvC complex processes Holliday junction (HJ) DNA during genetic recombination and DNA repair, while the RuvA-RuvB complex plays an important role in the rescue of blocked DNA replication forks via replication fork reversal (RFR). RuvA specifically binds to HJ cruciform DNA, conferring on it an open structure. The RuvB hexamer acts as an ATP-dependent pump, pulling dsDNA into and through the RuvAB complex. HJ branch migration allows RuvC to scan DNA until it finds its consensus sequence, where it cleaves and resolves the cruciform DNA. This is Holliday junction branch migration complex subunit RuvA from Campylobacter concisus (strain 13826).